Consider the following 136-residue polypeptide: Large ribosomal subunit protein uL16 (136 aa).

Residues Met1–Asn17 are compositionally biased toward basic residues. Positions Met1–Ala21 are disordered.

This sequence belongs to the universal ribosomal protein uL16 family. As to quaternary structure, part of the 50S ribosomal subunit.

Functionally, binds 23S rRNA and is also seen to make contacts with the A and possibly P site tRNAs. This chain is Large ribosomal subunit protein uL16, found in Buchnera aphidicola subsp. Acyrthosiphon kondoi (Acyrthosiphon kondoi symbiotic bacterium).